We begin with the raw amino-acid sequence, 144 residues long: Benzoylsuccinyl-CoA thiolase subunit BbsA (144 aa).

Residues Cys40, Cys43, Cys54, and Cys57 each contribute to the Zn(2+) site.

This sequence belongs to the BbsA family. In terms of assembly, heterotetramer composed of two BbsA subunits and two BbsB subunits. BbsA forms homodimeric subcomplexes. Both BbsA and BbsB are essential for enzymatic activity.

It catalyses the reaction (S)-2-benzoylsuccinyl-CoA + CoA = benzoyl-CoA + succinyl-CoA. Its pathway is xenobiotic degradation; toluene degradation. In terms of biological role, component of the BbsAB thiolase complex, which catalyzes the thiolytic cleavage of (S)-2-benzoylsuccinyl-CoA to succinyl-CoA and benzoyl-CoA, the final step of anaerobic toluene metabolism. The BbsA subunit critically contributes to an induced-fit process for productive binding of a CoA substrate into the active site of BbsB. This Thauera aromatica protein is Benzoylsuccinyl-CoA thiolase subunit BbsA.